We begin with the raw amino-acid sequence, 154 residues long: Myoglobin (154 aa).

One can recognise a Globin domain in the interval 2 to 148 (GLSDGEWQLV…FRKDMASNYK (147 aa)). At serine 4 the chain carries Phosphoserine. Histidine 65 is a nitrite binding site. An O2-binding site is contributed by histidine 65. Residue threonine 68 is modified to Phosphothreonine. Histidine 94 lines the heme b pocket.

Belongs to the globin family. As to quaternary structure, monomeric.

It is found in the cytoplasm. The protein resides in the sarcoplasm. The catalysed reaction is Fe(III)-heme b-[protein] + nitric oxide + H2O = Fe(II)-heme b-[protein] + nitrite + 2 H(+). The enzyme catalyses H2O2 + AH2 = A + 2 H2O. Functionally, monomeric heme protein which primary function is to store oxygen and facilitate its diffusion within muscle tissues. Reversibly binds oxygen through a pentacoordinated heme iron and enables its timely and efficient release as needed during periods of heightened demand. Depending on the oxidative conditions of tissues and cells, and in addition to its ability to bind oxygen, it also has a nitrite reductase activity whereby it regulates the production of bioactive nitric oxide. Under stress conditions, like hypoxia and anoxia, it also protects cells against reactive oxygen species thanks to its pseudoperoxidase activity. The protein is Myoglobin (MB) of Hylobates agilis (Agile gibbon).